The sequence spans 582 residues: Probable inorganic phosphate transporter 1-9 (582 aa).

Over 1-23 (MAPRIRVLAALDQARTQYYHFKA) the chain is Cytoplasmic. A helical transmembrane segment spans residues 24-44 (IVIAGMGLFTDSYDLFCISPV). Over 45–75 (MKIFGRVYYAPSGSVDGSGSGPGVTPPAVVS) the chain is Extracellular. Residues 76 to 96 (ATVGVALLGAVAGNVVFGALG) traverse the membrane as a helical segment. The Cytoplasmic segment spans residues 97-103 (DRVGRRR). Residues 104–124 (VYGACLLLMVCSSVGSGLSVC) form a helical membrane-spanning segment. Over 125–130 (RTRRCA) the chain is Extracellular. The helical transmembrane segment at 131–151 (LASLCFFRFLLGVGVGGDYPL) threads the bilayer. The Cytoplasmic segment spans residues 152-165 (SATIMSEFANRRTR). Residues 166–186 (GAFIAAVFSMQGFGILVSSAV) traverse the membrane as a helical segment. The Extracellular portion of the chain corresponds to 187 to 210 (TMAVAAAFDHYTGYPAPLDTPECA). The helical transmembrane segment at 211–231 (DLAWRIILMAGAVPAALTYYW) threads the bilayer. At 232–307 (RMSMPETARY…RRFVRQHGRD (76 aa)) the chain is on the cytoplasmic side. The chain crosses the membrane as a helical span at residues 308–328 (LFACAAAWFLLDIPYYSSTLF). Residues 329–354 (QSQIYRPWFPPAAKVNAFQEAFNVAK) lie on the Extracellular side of the membrane. Residues 355–375 (FQAVIAVASTIPGYFAAMLLI) traverse the membrane as a helical segment. At 376 to 385 (ERAGRRRLQM) the chain is on the cytoplasmic side. Residues 386–406 (AGFLLMAVFLFALAGPYDGYW) form a helical membrane-spanning segment. The Extracellular portion of the chain corresponds to 407-415 (RDHAKTAGY). The chain crosses the membrane as a helical span at residues 416–436 (IVLYSLTFFSANLGPNTTTFI). Residues 437 to 451 (LPAELFPARFRSTCH) are Cytoplasmic-facing. Residues 452–472 (GLSGAAGKLGALVGSIGFLWA) traverse the membrane as a helical segment. Topologically, residues 473 to 485 (SQQKDGAAAGHLP) are extracellular. The helical transmembrane segment at 486-506 (GIGMMYALFVLGGICLLGLAL) threads the bilayer. At 507–582 (TYAFTPETMT…SPILPHRMSL (76 aa)) the chain is on the cytoplasmic side. Residues 519-541 (LEENESSVQAQSQVGDGGSDAGN) form a disordered region.

Belongs to the major facilitator superfamily. Phosphate:H(+) symporter (TC 2.A.1.9) family. In terms of tissue distribution, expressed at low levels in roots.

The protein localises to the membrane. Functionally, high-affinity transporter for external inorganic phosphate. This chain is Probable inorganic phosphate transporter 1-9 (PHT1-9), found in Oryza sativa subsp. japonica (Rice).